The following is a 637-amino-acid chain: 5-hmdU DNA kinase (637 aa).

The disordered stretch occupies residues 249–269; the sequence is AEKGVKRGKKGRKTSPVAKTL.

It belongs to the thymidylate kinase family. 5-hmdU DNA kinase subfamily.

The enzyme catalyses 5-hydroxymethyl-dUMP in DNA + ATP = 5-phosphomethyl-dUMP in DNA + ADP + H(+). Its function is as follows. Phosphorylates 5-hydroxymethyluracil (5hmdU) into 5-phosphomethyl-2'-deoxyuridine (5- PmdU) on DNA as a step in the pathway leading to thymidine hypermodifications in the viral genome. The phosphate is added internally to the DNA polymer. As a final result of the pathway of hypermodification, alpha-glutamylthymidine (YdTMP) substitutes for about 20% of the thymidines in the viral DNA, the 80% left are dTMP. These modifications probably prevent degradation of viral genome by the host restriction-modification antiviral defense system. This is 5-hmdU DNA kinase from Bacillus phage SP10 (Bacillus phage SP-10).